The primary structure comprises 716 residues: Polyribonucleotide nucleotidyltransferase (716 aa).

The Mg(2+) site is built by D485 and D491. The region spanning 552–611 (PRFTTIKIDQDKIKDVIGKGGAVIRELTESTNTNIEIGDDGTIKVAASDQADADAAIEKI) is the KH domain. Residues 621–689 (GKIYQGKVAR…RQGRVRLSMK (69 aa)) form the S1 motif domain. The span at 689–698 (KEAAEKKEEP) shows a compositional bias: basic and acidic residues. Residues 689-716 (KEAAEKKEEPAPEAPAEPAAEEENKSEE) are disordered. Residues 707-716 (AAEEENKSEE) are compositionally biased toward acidic residues.

It belongs to the polyribonucleotide nucleotidyltransferase family. In terms of assembly, component of the RNA degradosome, which is a multiprotein complex involved in RNA processing and mRNA degradation. The cofactor is Mg(2+).

The protein resides in the cytoplasm. It catalyses the reaction RNA(n+1) + phosphate = RNA(n) + a ribonucleoside 5'-diphosphate. Its function is as follows. Involved in mRNA degradation. Catalyzes the phosphorolysis of single-stranded polyribonucleotides processively in the 3'- to 5'-direction. The protein is Polyribonucleotide nucleotidyltransferase of Idiomarina loihiensis (strain ATCC BAA-735 / DSM 15497 / L2-TR).